The following is a 187-amino-acid chain: Large ribosomal subunit protein bL9 (187 aa).

Residues Ala-155–Ala-187 are disordered. Positions Glu-166–Ala-187 are enriched in acidic residues.

It belongs to the bacterial ribosomal protein bL9 family.

Its function is as follows. Binds to the 23S rRNA. This Rhodospirillum centenum (strain ATCC 51521 / SW) protein is Large ribosomal subunit protein bL9.